A 394-amino-acid polypeptide reads, in one-letter code: Ribulose bisphosphate carboxylase large chain (394 aa).

Residue K5 is modified to N6,N6,N6-trimethyllysine. 2 residues coordinate substrate: N114 and T164. K166 (proton acceptor) is an active-site residue. Residue K168 participates in substrate binding. 3 residues coordinate Mg(2+): K192, D194, and E195. K192 is modified (N6-carboxylysine). The active-site Proton acceptor is the H285. Substrate-binding residues include R286, H318, and S370.

The protein belongs to the RuBisCO large chain family. Type I subfamily. As to quaternary structure, heterohexadecamer of 8 large chains and 8 small chains; disulfide-linked. The disulfide link is formed within the large subunit homodimers. It depends on Mg(2+) as a cofactor. In terms of processing, the disulfide bond which can form in the large chain dimeric partners within the hexadecamer appears to be associated with oxidative stress and protein turnover.

The protein localises to the plastid. Its subcellular location is the chloroplast. The enzyme catalyses 2 (2R)-3-phosphoglycerate + 2 H(+) = D-ribulose 1,5-bisphosphate + CO2 + H2O. It catalyses the reaction D-ribulose 1,5-bisphosphate + O2 = 2-phosphoglycolate + (2R)-3-phosphoglycerate + 2 H(+). Functionally, ruBisCO catalyzes two reactions: the carboxylation of D-ribulose 1,5-bisphosphate, the primary event in carbon dioxide fixation, as well as the oxidative fragmentation of the pentose substrate in the photorespiration process. Both reactions occur simultaneously and in competition at the same active site. This chain is Ribulose bisphosphate carboxylase large chain (rbcL), found in Nelumbo lutea (American lotus).